The chain runs to 144 residues: Nucleoside diphosphate kinase (144 aa).

6 residues coordinate ATP: K11, F59, R87, T93, R104, and N114. H117 serves as the catalytic Pros-phosphohistidine intermediate.

It belongs to the NDK family. As to quaternary structure, homotetramer. Requires Mg(2+) as cofactor.

It is found in the cytoplasm. It catalyses the reaction a 2'-deoxyribonucleoside 5'-diphosphate + ATP = a 2'-deoxyribonucleoside 5'-triphosphate + ADP. The enzyme catalyses a ribonucleoside 5'-diphosphate + ATP = a ribonucleoside 5'-triphosphate + ADP. Functionally, major role in the synthesis of nucleoside triphosphates other than ATP. The ATP gamma phosphate is transferred to the NDP beta phosphate via a ping-pong mechanism, using a phosphorylated active-site intermediate. In Aliivibrio fischeri (strain MJ11) (Vibrio fischeri), this protein is Nucleoside diphosphate kinase.